We begin with the raw amino-acid sequence, 277 residues long: Homeobox protein Nkx-6.2 (277 aa).

Residues 89–142 (AGVYFGPAAAVARGYPKPLAELPGRPPIFWPGVVQGAPWRDPRLAGPAPAGGVL) are repressor domain. 2 disordered regions span residues 132 to 155 (LAGP…RPTF) and 210 to 250 (EMAS…DDEK). Residues 148-207 (KKHSRPTFSGQQIFALEKTFEQTKYLAGPERARLAYSLGMTESQVKVWFQNRRTKWRKRH) constitute a DNA-binding region (homeobox). Residues 216–226 (KKQDSDAEKLK) show a composition bias toward basic and acidic residues.

Highest expression in brain.

The protein localises to the nucleus. In terms of biological role, transcription factor with repressor activity involved in the regulation of axon-glial interactions at myelin paranodes in oligodendrocytes. Binds to the consensus DNA sequence 5'-(A/T)TTAATGA-3'. In oligodendrocytes, binds to MBP and PLP1 promoter regions. The polypeptide is Homeobox protein Nkx-6.2 (NKX6-2) (Homo sapiens (Human)).